A 153-amino-acid chain; its full sequence is Large ribosomal subunit protein uL30 (153 aa).

Belongs to the universal ribosomal protein uL30 family. In terms of assembly, part of the 50S ribosomal subunit.

This chain is Large ribosomal subunit protein uL30, found in Methanospirillum hungatei JF-1 (strain ATCC 27890 / DSM 864 / NBRC 100397 / JF-1).